A 431-amino-acid polypeptide reads, in one-letter code: Tyrosine--tRNA ligase (431 aa).

Residue tyrosine 33 coordinates L-tyrosine. The 'HIGH' region signature appears at 38–47 (PTADSLHIGS). Residues tyrosine 172 and glutamine 176 each contribute to the L-tyrosine site. The 'KMSKS' region signature appears at 234-238 (KFGKS). ATP is bound at residue lysine 237. Residues 364-431 (LDIVTVLNEK…KKNYFVIRVV (68 aa)) enclose the S4 RNA-binding domain.

Belongs to the class-I aminoacyl-tRNA synthetase family. TyrS type 1 subfamily. In terms of assembly, homodimer.

The protein resides in the cytoplasm. The enzyme catalyses tRNA(Tyr) + L-tyrosine + ATP = L-tyrosyl-tRNA(Tyr) + AMP + diphosphate + H(+). Catalyzes the attachment of tyrosine to tRNA(Tyr) in a two-step reaction: tyrosine is first activated by ATP to form Tyr-AMP and then transferred to the acceptor end of tRNA(Tyr). This chain is Tyrosine--tRNA ligase, found in Flavobacterium johnsoniae (strain ATCC 17061 / DSM 2064 / JCM 8514 / BCRC 14874 / CCUG 350202 / NBRC 14942 / NCIMB 11054 / UW101) (Cytophaga johnsonae).